The primary structure comprises 295 residues: Polyprenyl transferase dpmaC (295 aa).

Helical transmembrane passes span 39–59 (LFCV…NDWI), 84–104 (QAFV…HVML), 109–124 (VHVI…YPFL), 131–151 (KLHI…AIPG), 168–188 (YCLP…TAYS), 213–233 (LVLV…LTQF), 237–257 (WLWV…LALF), and 271–291 (SNFV…LLKA).

It belongs to the UbiA prenyltransferase family. Mg(2+) is required as a cofactor.

The protein localises to the membrane. Its pathway is secondary metabolite biosynthesis; terpenoid biosynthesis. Its function is as follows. Polyprenyl transferase; part of the gene cluster that mediates the biosynthesis of the diterpenoid pyrones subglutinols A and B. The first step of the pathway is the synthesis of the alpha-pyrone moiety by the polyketide synthase dpmaA via condensation of one acetyl-CoA starter unit with 3 malonyl-CoA units and 2 methylations. The alpha-pyrone is then combined with geranylgeranyl pyrophosphate (GGPP) formed by the GGPP synthase dpmaD through the action of the prenyltransferase dpmaC to yield a linear alpha-pyrone diterpenoid. Subsequent steps in the diterpenoid pyrone biosynthetic pathway involve the decalin core formation, which is initiated by the epoxidation of the C10-C11 olefin by the FAD-dependent oxidoreductase dpmaE, and is followed by a cyclization cascade catalyzed by the terpene cyclase dpmaB. The dehydrogenase dpmaF is then involved in tetrahydrofuran (THF) ring formation at the C5 unit to complete the formation of subglutinols A and B. The chain is Polyprenyl transferase dpmaC from Metarhizium anisopliae (Entomophthora anisopliae).